A 145-amino-acid polypeptide reads, in one-letter code: Small ribosomal subunit protein eS12A (145 aa).

Belongs to the eukaryotic ribosomal protein eS12 family. As to quaternary structure, component of the small ribosomal subunit (SSU). Mature yeast ribosomes consist of a small (40S) and a large (60S) subunit. The 40S small subunit contains 1 molecule of ribosomal RNA (18S rRNA) and at least 33 different proteins. The large 60S subunit contains 3 rRNA molecules (25S, 5.8S and 5S rRNA) and at least 46 different proteins.

Its subcellular location is the cytoplasm. Component of the ribosome, a large ribonucleoprotein complex responsible for the synthesis of proteins in the cell. The small ribosomal subunit (SSU) binds messenger RNAs (mRNAs) and translates the encoded message by selecting cognate aminoacyl-transfer RNA (tRNA) molecules. The large subunit (LSU) contains the ribosomal catalytic site termed the peptidyl transferase center (PTC), which catalyzes the formation of peptide bonds, thereby polymerizing the amino acids delivered by tRNAs into a polypeptide chain. The nascent polypeptides leave the ribosome through a tunnel in the LSU and interact with protein factors that function in enzymatic processing, targeting, and the membrane insertion of nascent chains at the exit of the ribosomal tunnel. In Schizosaccharomyces pombe (strain 972 / ATCC 24843) (Fission yeast), this protein is Small ribosomal subunit protein eS12A (rps1201).